A 55-amino-acid polypeptide reads, in one-letter code: Large ribosomal subunit protein bL33 (55 aa).

It belongs to the bacterial ribosomal protein bL33 family. As to quaternary structure, part of the 50S ribosomal subunit. Contacts protein L35.

In terms of biological role, binds the 23S rRNA and the E site tRNA. In Deinococcus radiodurans (strain ATCC 13939 / DSM 20539 / JCM 16871 / CCUG 27074 / LMG 4051 / NBRC 15346 / NCIMB 9279 / VKM B-1422 / R1), this protein is Large ribosomal subunit protein bL33 (rpmG).